Consider the following 253-residue polypeptide: 1-(5-phosphoribosyl)-5-[(5-phosphoribosylamino)methylideneamino] imidazole-4-carboxamide isomerase (253 aa).

The Proton acceptor role is filled by Asp-19. The active-site Proton donor is the Asp-141.

It belongs to the HisA/HisF family.

The protein localises to the cytoplasm. The enzyme catalyses 1-(5-phospho-beta-D-ribosyl)-5-[(5-phospho-beta-D-ribosylamino)methylideneamino]imidazole-4-carboxamide = 5-[(5-phospho-1-deoxy-D-ribulos-1-ylimino)methylamino]-1-(5-phospho-beta-D-ribosyl)imidazole-4-carboxamide. Its pathway is amino-acid biosynthesis; L-histidine biosynthesis; L-histidine from 5-phospho-alpha-D-ribose 1-diphosphate: step 4/9. In Rhodopirellula baltica (strain DSM 10527 / NCIMB 13988 / SH1), this protein is 1-(5-phosphoribosyl)-5-[(5-phosphoribosylamino)methylideneamino] imidazole-4-carboxamide isomerase.